The following is a 319-amino-acid chain: Lipoyl synthase (319 aa).

The interval 6–29 (DTVSANPVRPRHPEKAARPDALSP) is disordered. Residues 16–29 (RHPEKAARPDALSP) are compositionally biased toward basic and acidic residues. Residues cysteine 61, cysteine 66, cysteine 72, cysteine 87, cysteine 91, cysteine 94, and serine 300 each contribute to the [4Fe-4S] cluster site. In terms of domain architecture, Radical SAM core spans 73–289 (WDKKHATFMI…QTTAYAKGFL (217 aa)).

Belongs to the radical SAM superfamily. Lipoyl synthase family. It depends on [4Fe-4S] cluster as a cofactor.

Its subcellular location is the cytoplasm. It carries out the reaction [[Fe-S] cluster scaffold protein carrying a second [4Fe-4S](2+) cluster] + N(6)-octanoyl-L-lysyl-[protein] + 2 oxidized [2Fe-2S]-[ferredoxin] + 2 S-adenosyl-L-methionine + 4 H(+) = [[Fe-S] cluster scaffold protein] + N(6)-[(R)-dihydrolipoyl]-L-lysyl-[protein] + 4 Fe(3+) + 2 hydrogen sulfide + 2 5'-deoxyadenosine + 2 L-methionine + 2 reduced [2Fe-2S]-[ferredoxin]. Its pathway is protein modification; protein lipoylation via endogenous pathway; protein N(6)-(lipoyl)lysine from octanoyl-[acyl-carrier-protein]: step 2/2. In terms of biological role, catalyzes the radical-mediated insertion of two sulfur atoms into the C-6 and C-8 positions of the octanoyl moiety bound to the lipoyl domains of lipoate-dependent enzymes, thereby converting the octanoylated domains into lipoylated derivatives. The chain is Lipoyl synthase from Rhodopseudomonas palustris (strain ATCC BAA-98 / CGA009).